The chain runs to 362 residues: Cobalt-precorrin-5B C(1)-methyltransferase (362 aa).

The protein belongs to the CbiD family.

The enzyme catalyses Co-precorrin-5B + S-adenosyl-L-methionine = Co-precorrin-6A + S-adenosyl-L-homocysteine. It participates in cofactor biosynthesis; adenosylcobalamin biosynthesis; cob(II)yrinate a,c-diamide from sirohydrochlorin (anaerobic route): step 6/10. Catalyzes the methylation of C-1 in cobalt-precorrin-5B to form cobalt-precorrin-6A. This is Cobalt-precorrin-5B C(1)-methyltransferase from Geotalea daltonii (strain DSM 22248 / JCM 15807 / FRC-32) (Geobacter daltonii).